The chain runs to 48 residues: DNA gyrase inhibitor YacG (48 aa).

Zn(2+) contacts are provided by Cys-9, Cys-12, Cys-28, and Cys-32.

This sequence belongs to the DNA gyrase inhibitor YacG family. In terms of assembly, interacts with GyrB. Zn(2+) is required as a cofactor.

Inhibits all the catalytic activities of DNA gyrase by preventing its interaction with DNA. Acts by binding directly to the C-terminal domain of GyrB, which probably disrupts DNA binding by the gyrase. The polypeptide is DNA gyrase inhibitor YacG (Wigglesworthia glossinidia brevipalpis).